The following is a 402-amino-acid chain: Enoyl-[acyl-carrier-protein] reductase [NADH] (402 aa).

Residues 48–53, 74–75, 111–112, and 140–141 contribute to the NAD(+) site; these read GASSGY, FE, DA, and LA. Tyr-226 contacts substrate. Tyr-236 functions as the Proton donor in the catalytic mechanism. NAD(+)-binding positions include Lys-245 and 274-276; that span reads VVT.

It belongs to the TER reductase family. Monomer.

It catalyses the reaction a 2,3-saturated acyl-[ACP] + NAD(+) = a (2E)-enoyl-[ACP] + NADH + H(+). It functions in the pathway lipid metabolism; fatty acid biosynthesis. Involved in the final reduction of the elongation cycle of fatty acid synthesis (FAS II). Catalyzes the reduction of a carbon-carbon double bond in an enoyl moiety that is covalently linked to an acyl carrier protein (ACP). The protein is Enoyl-[acyl-carrier-protein] reductase [NADH] of Xanthomonas campestris pv. campestris (strain 8004).